Reading from the N-terminus, the 304-residue chain is MSTRTEAVKAYLLDLQDRICTALEQEDGSAHFMEDAWTRPAGGGGRTRVIENGTVIEKGGVNFSHVFGSNLPPSASAHRPELAGRGFEALGVSLVIHPHNPHVPTSHANVRFFIAEKEGEEAVWWFGGGFDLTPYYGVEEDCVHWHRVAERACAPFGEDVYPRYKAWCDSYFHLKHRDEPRGIGGLFFDDVNQWDFDTSFAFIRAIGDAFINAYLPIVRRRKAAAYTVQQREFQEFRRGRYVEFNLVYDRGTLFGLQSGGRTESILMSLPPQVRWGYDWKAAPGSEEARLTEYFLTDRDWLAEN.

Serine 93 is a substrate binding site. Residues histidine 97 and histidine 107 each coordinate a divalent metal cation. The active-site Proton donor is the histidine 107. 109–111 provides a ligand contact to substrate; the sequence is NVR. Positions 146 and 176 each coordinate a divalent metal cation. Residues 241–276 are important for dimerization; the sequence is YVEFNLVYDRGTLFGLQSGGRTESILMSLPPQVRWG. 259–261 provides a ligand contact to substrate; sequence GGR.

This sequence belongs to the aerobic coproporphyrinogen-III oxidase family. Homodimer. It depends on a divalent metal cation as a cofactor.

The protein localises to the cytoplasm. The catalysed reaction is coproporphyrinogen III + O2 + 2 H(+) = protoporphyrinogen IX + 2 CO2 + 2 H2O. The protein operates within porphyrin-containing compound metabolism; protoporphyrin-IX biosynthesis; protoporphyrinogen-IX from coproporphyrinogen-III (O2 route): step 1/1. In terms of biological role, involved in the heme biosynthesis. Catalyzes the aerobic oxidative decarboxylation of propionate groups of rings A and B of coproporphyrinogen-III to yield the vinyl groups in protoporphyrinogen-IX. This chain is Oxygen-dependent coproporphyrinogen-III oxidase, found in Pseudomonas syringae pv. syringae (strain B728a).